The chain runs to 93 residues: MKDSYISIVIAYLMVTFILVSSMPIEGEKGELGPHRLPCPPGYENYCFNGKCVHVVAQDEPGKPCYSCICDEFYIGERCGTLDLTNPGYFLKG.

An N-terminal signal peptide occupies residues 1-30; sequence MKDSYISIVIAYLMVTFILVSSMPIEGEKG. 3 cysteine pairs are disulfide-bonded: Cys39/Cys52, Cys47/Cys68, and Cys70/Cys79. One can recognise an EGF-like domain in the interval 43 to 80; that stretch reads YENYCFNGKCVHVVAQDEPGKPCYSCICDEFYIGERCG.

The protein belongs to the EGF domain peptide family. Expressed by the venom gland.

It localises to the secreted. Functionally, ant peptide with probable defensive activity which acts as a potent agonist of the mammalian epidermal growth factor receptor (EGFR). Mimics, both structurally and functionally, vertebrate epidermal growth factor (EGF) peptide hormones. In vivo, intraplantar injection in mice causes long-lasting (several days) hypersensitivity of the injected paw to both mechanical and thermal stimuli. Its long-lasting effect is unusual for venom toxins whose effects are usually immediate. One possible explanation is that it would reduce the duration of a nest attack, discourage future attacks, or enhance the actions of subsequent exposure to other pain-inducing venom peptides. This chain is OMEGA-ectatommitoxin(02)-Rm1c, found in Rhytidoponera metallica (Australian green-headed ant).